The following is a 372-amino-acid chain: MADS-box transcription factor pvg4 (372 aa).

In terms of domain architecture, MADS-box spans 1 to 61; sequence MGRKKISIAP…GRLHVFCSSD (61 aa). The segment at 81–187 is disordered; the sequence is SHFSSSPVEE…HPPHPHFHNN (107 aa). A compositionally biased stretch (low complexity) spans 84–100; that stretch reads SSSPVEESSTVSPETTT. A compositionally biased stretch (polar residues) spans 114 to 145; the sequence is QDQPLSDSQLDTGDSPATSETTVQDYNPQVQS. Positions 167-184 are enriched in basic residues; that stretch reads QHHHPHTRPPHHPPHPHF.

Its subcellular location is the nucleus. Its function is as follows. Acts in transcription regulation. May bind to a MEF2-like typee II promoter sequence. This chain is MADS-box transcription factor pvg4 (pvg4), found in Schizosaccharomyces pombe (strain 972 / ATCC 24843) (Fission yeast).